The sequence spans 451 residues: POU domain, class 3, transcription factor 1 (451 aa).

Disordered stretches follow at residues 1–21 (MATT…GTGP), 69–114 (AHPQ…GFHA), 134–154 (AHHL…HQPQ), 186–253 (GLHH…PSSD), and 395–451 (KRMT…GSVQ). Composition is skewed to gly residues over residues 11–20 (GPGGGAGGTG), 76–85 (TGGGGGGDWA), and 95–112 (AGGG…GGGF). Over residues 134 to 145 (AHHLGPAMSPSP) the composition is skewed to low complexity. Positions 190 to 199 (ALHEDGHEAQ) are enriched in basic and acidic residues. The span at 220 to 232 (AGGLHAAAAHLHP) shows a compositional bias: low complexity. Positions 247–321 (EDAPSSDDLE…LLNKWLEETD (75 aa)) constitute a POU-specific domain. The homeobox DNA-binding region spans 339–398 (KRKKRTSIEVGVKGALESHFLKCPKPSAHEITGLADSLQLEKEVVRVWFCNRRQKEKRMT). Over residues 427–436 (PSAPPPPPPA) the composition is skewed to pro residues.

The protein belongs to the POU transcription factor family. Class-3 subfamily. As to expression, neural tissues and testis.

It is found in the nucleus. Functionally, transcription factor that binds to the octamer motif (5'-ATTTGCAT-3'). Acts as a transcriptional activator when binding cooperatively with SOX4, SOX11, or SOX12 to gene promoters. Acts as a transcriptional repressor of myelin-specific genes. This chain is POU domain, class 3, transcription factor 1 (Pou3f1), found in Rattus norvegicus (Rat).